Reading from the N-terminus, the 208-residue chain is Small ribosomal subunit protein uS4 (208 aa).

An S4 RNA-binding domain is found at R98 to N158.

The protein belongs to the universal ribosomal protein uS4 family. As to quaternary structure, part of the 30S ribosomal subunit. Contacts protein S5. The interaction surface between S4 and S5 is involved in control of translational fidelity.

Functionally, one of the primary rRNA binding proteins, it binds directly to 16S rRNA where it nucleates assembly of the body of the 30S subunit. In terms of biological role, with S5 and S12 plays an important role in translational accuracy. The sequence is that of Small ribosomal subunit protein uS4 from Geotalea daltonii (strain DSM 22248 / JCM 15807 / FRC-32) (Geobacter daltonii).